The primary structure comprises 454 residues: MKHSLTIIGAGLAGCEAAWQAARRGVSVTLHEMKPEKRSPAHHLPGLAELVCSNSLRGDSLENAVGLLKEELRRGGSLIMEAAEATRVPAGGALAVDRQLFSDYVTAKITAHPLINLVHGEMDAIPAEGTVIIASGPLTSDALAASLSGLTGDRLYFYDSIAPIVTADSLDREKVFAASRYGKGDGDDYLNCPLDREQYQAFVEQLNRGEKVAAREFEKLVHFEGCMPVEELAGRGEDTLRFGPMKPVGLTDPRTGIEPHAVIQLRAENREKTMYNLVGFQTKLTWPEQRRIFRTIPGLERAEFVRLGSMHRNTFINAPALLQPTQQLRSDPRIFFAGQITGVEGYVESAGSGFLAGITAARLLTGMPDPAVPPAETALGALVSHITNADVRHFQPMNVNYGLFPDLEGRIKKKERRGKLAERALASLSGWLERVSPPSRETGEPTGAEQVDLA.

Residue 9 to 14 (GAGLAG) coordinates FAD. A disordered region spans residues 432 to 454 (LERVSPPSRETGEPTGAEQVDLA).

This sequence belongs to the MnmG family. TrmFO subfamily. FAD serves as cofactor.

It localises to the cytoplasm. The catalysed reaction is uridine(54) in tRNA + (6R)-5,10-methylene-5,6,7,8-tetrahydrofolate + NADH + H(+) = 5-methyluridine(54) in tRNA + (6S)-5,6,7,8-tetrahydrofolate + NAD(+). The enzyme catalyses uridine(54) in tRNA + (6R)-5,10-methylene-5,6,7,8-tetrahydrofolate + NADPH + H(+) = 5-methyluridine(54) in tRNA + (6S)-5,6,7,8-tetrahydrofolate + NADP(+). Catalyzes the folate-dependent formation of 5-methyl-uridine at position 54 (M-5-U54) in all tRNAs. The sequence is that of Methylenetetrahydrofolate--tRNA-(uracil-5-)-methyltransferase TrmFO from Pelobacter propionicus (strain DSM 2379 / NBRC 103807 / OttBd1).